We begin with the raw amino-acid sequence, 154 residues long: Methylglyoxal synthase (154 aa).

In terms of domain architecture, MGS-like spans 6-154 (SPLPANKAIA…AYMARRAQGN (149 aa)). Substrate-binding positions include H19, K23, 45-48 (TGTT), and 65-66 (SG). D71 acts as the Proton donor/acceptor in catalysis. H98 contacts substrate.

Belongs to the methylglyoxal synthase family.

The enzyme catalyses dihydroxyacetone phosphate = methylglyoxal + phosphate. Catalyzes the formation of methylglyoxal from dihydroxyacetone phosphate. The protein is Methylglyoxal synthase of Cellvibrio japonicus (strain Ueda107) (Pseudomonas fluorescens subsp. cellulosa).